Here is a 162-residue protein sequence, read N- to C-terminus: MFNKNFWTSIIIGCLFCTITYSGVNAAALDEETRTVALNSTETVVLTPEQVKRGKRLFNSTCGICHVGGITKTNPNVGLDSEALALATPPRNNIESLVDYMKNPTSYDGSEEIYDIHPSIRSADAFPKMRNLTEEDLYDIAGHILLSPKILPSQWGGGKIYY.

Positions 1–26 are cleaved as a signal peptide; sequence MFNKNFWTSIIIGCLFCTITYSGVNA. Heme c-binding residues include cysteine 62, cysteine 65, histidine 66, and histidine 117.

The protein belongs to the cytochrome c family. PsbV subfamily. As to quaternary structure, PSII is composed of 1 copy each of membrane proteins PsbA, PsbB, PsbC, PsbD, PsbE, PsbF, PsbH, PsbI, PsbJ, PsbK, PsbL, PsbM, PsbT, PsbX, PsbY, PsbZ, Psb30/Ycf12, at least 3 peripheral proteins of the oxygen-evolving complex and a large number of cofactors. It forms dimeric complexes. The cofactor is heme c.

It is found in the plastid. The protein localises to the cyanelle thylakoid membrane. Its function is as follows. One of the extrinsic, lumenal subunits of photosystem II (PSII). PSII is a light-driven water plastoquinone oxidoreductase, using light energy to abstract electrons from H(2)O, generating a proton gradient subsequently used for ATP formation. The extrinsic proteins stabilize the structure of photosystem II oxygen-evolving complex (OEC), the ion environment of oxygen evolution and protect the OEC against heat-induced inactivation. This Cyanophora paradoxa protein is Photosystem II extrinsic protein V.